The following is a 400-amino-acid chain: Large envelope protein (400 aa).

Met-1 bears the N-acetylmethionine mark. Disordered stretches follow at residues Met-1–Glu-54 and Leu-85–His-116. A lipid anchor (N-myristoyl glycine; by host) is attached at Gly-2. Positions Gly-2–Ala-119 are pre-S1. The tract at residues Gly-2–Asn-174 is pre-S. At Gly-2–Gly-181 the chain is on the virion surface; in external conformation side. The Intravirion; in internal conformation portion of the chain corresponds to Gly-2–Arg-253. Residue Trp-4 is glycosylated (N-linked (GlcNAc...) asparagine). Over residues Ser-96–Thr-106 the composition is skewed to polar residues. The pre-S2 stretch occupies residues Met-120 to Asn-174. A helical membrane pass occupies residues Phe-182–Ile-202. Over Pro-203–Arg-253 the chain is Intravirion; in external conformation. Residues Phe-254–Tyr-274 traverse the membrane as a helical segment. Topologically, residues Gln-275–Ser-348 are virion surface. Asn-320 is a glycosylation site (N-linked (GlcNAc...) asparagine; by host). A helical transmembrane segment spans residues Leu-349–Ile-369. Residues Trp-370–Trp-375 are Intravirion-facing. The chain crosses the membrane as a helical span at residues Gly-376–Val-398. The Virion surface portion of the chain corresponds to Tyr-399–Ile-400.

The protein belongs to the orthohepadnavirus major surface antigen family. In terms of assembly, in its internal form (Li-HBsAg), interacts with the capsid protein and with the isoform S. Interacts with host chaperone CANX. As to quaternary structure, associates with host chaperone CANX through its pre-S2 N glycan; this association may be essential for isoform M proper secretion. Interacts with isoform L. Interacts with the antigens of satellite virus HDV (HDVAgs); this interaction is required for encapsidation of HDV genomic RNA. Post-translationally, isoform M is N-terminally acetylated by host at a ratio of 90%, and N-glycosylated by host at the pre-S2 region. Myristoylated.

It is found in the virion membrane. In terms of biological role, the large envelope protein exists in two topological conformations, one which is termed 'external' or Le-HBsAg and the other 'internal' or Li-HBsAg. In its external conformation the protein attaches the virus to cell receptors and thereby initiating infection. This interaction determines the species specificity and liver tropism. This attachment induces virion internalization predominantly through caveolin-mediated endocytosis. The large envelope protein also assures fusion between virion membrane and endosomal membrane. In its internal conformation the protein plays a role in virion morphogenesis and mediates the contact with the nucleocapsid like a matrix protein. Functionally, the middle envelope protein plays an important role in the budding of the virion. It is involved in the induction of budding in a nucleocapsid independent way. In this process the majority of envelope proteins bud to form subviral lipoprotein particles of 22 nm of diameter that do not contain a nucleocapsid. In Homo sapiens (Human), this protein is Large envelope protein.